The following is a 783-amino-acid chain: Probable phosphoketolase (783 aa).

This sequence belongs to the XFP family. The cofactor is thiamine diphosphate.

In Rhodopseudomonas palustris (strain ATCC BAA-98 / CGA009), this protein is Probable phosphoketolase.